The chain runs to 567 residues: Hydrogenase-2 large chain (567 aa).

Residues Cys61, Cys64, Cys546, and Cys549 each coordinate Ni(2+). The propeptide occupies Val553–Leu567.

This sequence belongs to the [NiFe]/[NiFeSe] hydrogenase large subunit family. Heterodimer of a large and a small subunit. Ni(2+) serves as cofactor.

It localises to the cell membrane. The enzyme catalyses H2 + A = AH2. Functionally, this is one of three E.coli hydrogenases synthesized in response to different physiological conditions. HYD2 is involved in hydrogen uptake. In Escherichia coli O157:H7, this protein is Hydrogenase-2 large chain (hybC).